A 95-amino-acid polypeptide reads, in one-letter code: Small ubiquitin-related modifier 4 (95 aa).

A Ubiquitin-like domain is found at 17–95; the sequence is HINLKVAGQD…VLQQQTGGVY (79 aa). Residue Gly93 forms a Glycyl lysine isopeptide (Gly-Lys) (interchain with K-? in acceptor proteins) linkage. A propeptide spanning residues 94 to 95 is cleaved from the precursor; the sequence is VY.

It belongs to the ubiquitin family. SUMO subfamily. As to quaternary structure, interacts with SAE2. Covalently attached to a number of proteins.

Its function is as follows. Ubiquitin-like protein which can be covalently attached to target lysines as a monomer. Does not seem to be involved in protein degradation and may modulate protein subcellular localization, stability or activity. Upon oxidative stress, conjugates to various anti-oxidant enzymes, chaperones, and stress defense proteins. May also conjugate to NFKBIA, TFAP2A and FOS, negatively regulating their transcriptional activity, and to NR3C1, positively regulating its transcriptional activity. Covalent attachment to its substrates requires prior activation by the E1 complex SAE1-SAE2 and linkage to the E2 enzyme UBE2I. The chain is Small ubiquitin-related modifier 4 (SUMO4) from Sus scrofa (Pig).